Consider the following 72-residue polypeptide: DNA-directed RNA polymerase subunit omega (72 aa).

It belongs to the RNA polymerase subunit omega family. The RNAP catalytic core consists of 2 alpha, 1 beta, 1 beta' and 1 omega subunit. When a sigma factor is associated with the core the holoenzyme is formed, which can initiate transcription.

It carries out the reaction RNA(n) + a ribonucleoside 5'-triphosphate = RNA(n+1) + diphosphate. Functionally, promotes RNA polymerase assembly. Latches the N- and C-terminal regions of the beta' subunit thereby facilitating its interaction with the beta and alpha subunits. The sequence is that of DNA-directed RNA polymerase subunit omega from Campylobacter lari (strain RM2100 / D67 / ATCC BAA-1060).